A 402-amino-acid chain; its full sequence is Elongation factor Tu (402 aa).

The 203-residue stretch at K10–K212 folds into the tr-type G domain. A G1 region spans residues G19–T26. Position 19–26 (G19–T26) interacts with GTP. Residue T26 participates in Mg(2+) binding. Residues G60 to A64 are G2. A G3 region spans residues D81–G84. Residues D81–H85 and N136–D139 contribute to the GTP site. A G4 region spans residues N136–D139. Positions S177 to F179 are G5.

Belongs to the TRAFAC class translation factor GTPase superfamily. Classic translation factor GTPase family. EF-Tu/EF-1A subfamily. As to quaternary structure, monomer.

Its subcellular location is the cytoplasm. The enzyme catalyses GTP + H2O = GDP + phosphate + H(+). Functionally, GTP hydrolase that promotes the GTP-dependent binding of aminoacyl-tRNA to the A-site of ribosomes during protein biosynthesis. The protein is Elongation factor Tu of Sulfurovum sp. (strain NBC37-1).